Here is a 167-residue protein sequence, read N- to C-terminus: ATP synthase subunit b (167 aa).

Residues 8-28 (AEAEFWVGAGLLIFLGIVFFG) form a helical membrane-spanning segment.

The protein belongs to the ATPase B chain family. In terms of assembly, F-type ATPases have 2 components, F(1) - the catalytic core - and F(0) - the membrane proton channel. F(1) has five subunits: alpha(3), beta(3), gamma(1), delta(1), epsilon(1). F(0) has three main subunits: a(1), b(2) and c(10-14). The alpha and beta chains form an alternating ring which encloses part of the gamma chain. F(1) is attached to F(0) by a central stalk formed by the gamma and epsilon chains, while a peripheral stalk is formed by the delta and b chains.

The protein localises to the cell inner membrane. Functionally, f(1)F(0) ATP synthase produces ATP from ADP in the presence of a proton or sodium gradient. F-type ATPases consist of two structural domains, F(1) containing the extramembraneous catalytic core and F(0) containing the membrane proton channel, linked together by a central stalk and a peripheral stalk. During catalysis, ATP synthesis in the catalytic domain of F(1) is coupled via a rotary mechanism of the central stalk subunits to proton translocation. Its function is as follows. Component of the F(0) channel, it forms part of the peripheral stalk, linking F(1) to F(0). This is ATP synthase subunit b from Phenylobacterium zucineum (strain HLK1).